Reading from the N-terminus, the 205-residue chain is CASP-like protein 2A1 (205 aa).

The disordered stretch occupies residues 1-25 (MDKSKVSTAVGGETPVGLITGSRDD). The Cytoplasmic segment spans residues 1–34 (MDKSKVSTAVGGETPVGLITGSRDDELESGSMRT). Residues 35–55 (AETVLRLVPMAFCISALVLML) traverse the membrane as a helical segment. Residues 56–76 (KNSQTNDFGTLSYSDLGAFRY) are Extracellular-facing. Residues 77–97 (LVHANGICAGYSLLSAIIVAM) traverse the membrane as a helical segment. Topologically, residues 98–105 (PRPSTMSR) are cytoplasmic. A helical transmembrane segment spans residues 106 to 126 (AWTFFFLDQVLTYVILAAAAV). At 127 to 156 (SVEALYLARKGDIAITWSAACVSFGGFCHK) the chain is on the extracellular side. Residues 157 to 177 (AITSAVITFIVVVCYALLSLV) form a helical membrane-spanning segment. Residues 178–205 (SSYKLFSRYGAPDVSYPGKGIEVAAFHS) lie on the Cytoplasmic side of the membrane.

This sequence belongs to the Casparian strip membrane proteins (CASP) family. In terms of assembly, homodimer and heterodimers.

Its subcellular location is the cell membrane. The protein is CASP-like protein 2A1 of Ricinus communis (Castor bean).